The sequence spans 337 residues: MTSAPVQTDILALAREQVLERGDALNESQVLEVLQLPDDRLEELLALAHDVRMKWCGPEVEVEGIISLKTGGCPEDCHFCSQSGLFQSPVRAAWLDIPSLVEAAKQTAKSGASEFCIVAAVRGPDERLLAQVAAGIEAIRNEVDIQIACSLGMLTQEQVDQLAAMGVHRYNHNLETSKSHFPNVVTTHTWDERWNTLRMVREAGMEVCCGGILGMGESLEQRAEFAANLAELEPDEVPLNFLNPRPGTPFGDLEVLPASEALKSVAAFRLALPRTILRFAGGREITLGDLGAKQGILGGINAVIVGNYLTTLGRPAEQDLDLLVDLQMPIKALNDTL.

The Radical SAM core domain occupies 58–283; it reads PEVEVEGIIS…RTILRFAGGR (226 aa). [4Fe-4S] cluster-binding residues include Cys73, Cys77, and Cys80. Residues Cys116, Cys149, Cys208, and Arg278 each coordinate [2Fe-2S] cluster.

The protein belongs to the radical SAM superfamily. Biotin synthase family. Homodimer. [4Fe-4S] cluster is required as a cofactor. It depends on [2Fe-2S] cluster as a cofactor.

The enzyme catalyses (4R,5S)-dethiobiotin + (sulfur carrier)-SH + 2 reduced [2Fe-2S]-[ferredoxin] + 2 S-adenosyl-L-methionine = (sulfur carrier)-H + biotin + 2 5'-deoxyadenosine + 2 L-methionine + 2 oxidized [2Fe-2S]-[ferredoxin]. It participates in cofactor biosynthesis; biotin biosynthesis; biotin from 7,8-diaminononanoate: step 2/2. Its function is as follows. Catalyzes the conversion of dethiobiotin (DTB) to biotin by the insertion of a sulfur atom into dethiobiotin via a radical-based mechanism. This chain is Biotin synthase, found in Rhodococcus jostii (strain RHA1).